Consider the following 536-residue polypeptide: Chaperonin GroEL 1 (536 aa).

ATP is bound by residues 29 to 32, 86 to 90, glycine 413, 476 to 478, and aspartate 492; these read TLGP, DGTTT, and NAA.

This sequence belongs to the chaperonin (HSP60) family. In terms of assembly, forms a cylinder of 14 subunits composed of two heptameric rings stacked back-to-back. Interacts with the co-chaperonin GroES.

It localises to the cytoplasm. It catalyses the reaction ATP + H2O + a folded polypeptide = ADP + phosphate + an unfolded polypeptide.. Its function is as follows. Together with its co-chaperonin GroES, plays an essential role in assisting protein folding. The GroEL-GroES system forms a nano-cage that allows encapsulation of the non-native substrate proteins and provides a physical environment optimized to promote and accelerate protein folding. The polypeptide is Chaperonin GroEL 1 (Nocardia farcinica (strain IFM 10152)).